The primary structure comprises 274 residues: Putative ankyrin repeat protein R597 (274 aa).

ANK repeat units follow at residues 78–112 (VGLPSLGYFTKNKDEFHNSLELMKLLLQYDMNNND), 114–144 (PISEYLYNAVKQNNFEKVKLLIDNGINSLKI), 146–174 (SRYHFENKYIYNNHEIVKYMIDNGVDIQG), and 176–205 (NLSYALHSCIISDNNDGVEYYFNIGANIND).

In Acanthamoeba polyphaga mimivirus (APMV), this protein is Putative ankyrin repeat protein R597.